Here is a 233-residue protein sequence, read N- to C-terminus: MLIVLSLGGSILAKNLDPDRFLKYANALRDISKKHTLLVVTGGGEAARDYIGAARAMGADEVTCDYIGIEITRLNARLLISALGHDAYPEIPSNYPEASKAMTSGKVVVMGGVTPGQTTDAVASILAEYLRADLLTIATSIDGVYSSDPNCDPCAVKYEKISPEKLINIVMAIEMKAGSKSPVDPVAAKIIERCKLDALVMDARNPDLLVEVICGEAAKKSPVSCGTWITAKK.

An ATP-binding site is contributed by Gly9–Ser10. Gly43 lines the UMP pocket. The ATP site is built by Gly44 and Arg48. UMP contacts are provided by residues Asp65 and Val113–Thr119. 3 residues coordinate ATP: Thr139, Tyr145, and Asp148.

The protein belongs to the UMP kinase family. As to quaternary structure, homohexamer.

The protein localises to the cytoplasm. The enzyme catalyses UMP + ATP = UDP + ADP. Its pathway is pyrimidine metabolism; CTP biosynthesis via de novo pathway; UDP from UMP (UMPK route): step 1/1. Its activity is regulated as follows. Inhibited by UTP. Catalyzes the reversible phosphorylation of UMP to UDP. In Methanosarcina mazei (strain ATCC BAA-159 / DSM 3647 / Goe1 / Go1 / JCM 11833 / OCM 88) (Methanosarcina frisia), this protein is Uridylate kinase.